The sequence spans 209 residues: Large ribosomal subunit protein uL3 (209 aa).

Position 150 is an N5-methylglutamine (glutamine 150).

The protein belongs to the universal ribosomal protein uL3 family. Part of the 50S ribosomal subunit. Forms a cluster with proteins L14 and L19. Post-translationally, methylated by PrmB.

One of the primary rRNA binding proteins, it binds directly near the 3'-end of the 23S rRNA, where it nucleates assembly of the 50S subunit. In Buchnera aphidicola subsp. Acyrthosiphon pisum (strain 5A), this protein is Large ribosomal subunit protein uL3.